We begin with the raw amino-acid sequence, 474 residues long: Pleckstrin homology domain-containing family S member 1 (474 aa).

In terms of domain architecture, PH spans 20 to 135; it reads EVHKRDYFIK…WVSFMTPYCQ (116 aa). Disordered stretches follow at residues 232–251, 272–321, and 449–474; these read IAGP…DQGF, STSA…DDQK, and RDLP…AAGE. A compositionally biased stretch (polar residues) spans 238–248; it reads SGDSIESNSPD. Positions 449 to 458 are enriched in basic and acidic residues; that stretch reads RDLPELERTP.

The polypeptide is Pleckstrin homology domain-containing family S member 1 (Mus musculus (Mouse)).